Reading from the N-terminus, the 423-residue chain is Zinc finger protein Gfi-1 (423 aa).

Positions 1-20 (MPRSFLVKSKKAHSYHQPRS) are SNAG domain. Residues 1–102 (MPRSFLVKSK…PPSPSVSPAS (102 aa)) form a disordered region. Phosphoserine occurs at positions 20 and 57. The span at 48–57 (SKMEPRERLS) shows a compositional bias: basic and acidic residues. Positions 141 to 258 (RQCSALERSA…LLLGGGSYKC (118 aa)) are required for interaction with RELA. 6 C2H2-type zinc fingers span residues 256–279 (YKCI…RRSH), 285–307 (FACE…KAVH), 313–335 (FDCK…LLIH), 341–363 (YPCQ…TFIH), 369–391 (HKCQ…SRKH), and 397–420 (FGCD…ETQH).

As to quaternary structure, interacts with U2AF1L4. Component of RCOR-GFI-KDM1A-HDAC complexes. Interacts directly with RCOR1, KDM1A and HDAC2. Also interacts with HDAC1. regions. Interacts (via the zinc-finger domain) with ARIH2; the interaction prevents GFI1 ubiquitination and proteasomal degradation. Interacts with PIAS3; the interaction relieves the inhibitory effect of PIAS3 on STAT3-mediated transcriptional activity. Forms a complex with EHMT2 and HDAC1 to promote 'Lys-9' dimethylation of H3 (H3K9Me2) and repress expression of target genes. Interacts directly with EHMT2. Component of the GFI1-AJUBA-HDAC1 repressor complex. Interacts directly with AJUBA (via ITS LIM domains); the interaction results in the HDAC-dependent corepression of a subset of GFI1 target genes and, occurs independent of the SNAG domain. Interacts with SPI1; the interaction inhibits SPI1 transcriptional activity targeted at macrophage-specific genes, repressing macrophage differentiation of myeloid progenitor cells and promoting granulocyte commitment. Interacts with RUNX1T1; the interaction represses HDAC-mediated transcriptional activity. Interacts with RELA; the interaction occurs on liposaccharide (LPS) stimulation controls RELA DNA binding activity and regulates endotoxin-mediated TOLL-like receptor inflammatory response. Interacts (via the C-terminal zinc fingers) with ZBTB17; the interaction results in the recruitment of GFI1 to the CDKN1A/p21 promoter and repression of CDKN1A/p21 transcription. In terms of processing, ubiquitinated. As to expression, restricted to lymphoid tissues and testes in adult animals.

Its subcellular location is the nucleus. Its function is as follows. Transcription repressor essential for hematopoiesis. Functions in a cell-context and development-specific manner. Binds to 5'-TAAATCAC[AT]GCA-3' in the promoter region of a large number of genes. Component of several complexes, including the EHMT2-GFI1-HDAC1, AJUBA-GFI1-HDAC1 and RCOR-GFI-KDM1A-HDAC complexes, that suppress, via histone deacetylase (HDAC) recruitment, a number of genes implicated in multilineage blood cell development. Regulates neutrophil differentiation, promotes proliferation of lymphoid cells, and is required for granulocyte development. Inhibits SPI1 transcriptional activity at macrophage-specific genes, repressing macrophage differentiation of myeloid progenitor cells and promoting granulocyte commitment. Mediates, together with U2AF1L4, the alternative splicing of CD45 and controls T-cell receptor signaling. Regulates the endotoxin-mediated Toll-like receptor (TLR) inflammatory response by antagonizing RELA. Cooperates with CBFA2T2 to regulate ITGB1-dependent neurite growth. Controls cell-cycle progression by repressing CDKNIA/p21 transcription in response to TGFB1 via recruitment of GFI1 by ZBTB17 to the CDKNIA/p21 and CDKNIB promoters. Required for the maintenance of inner ear hair cells. In addition to its role in transcription, acts as a substrate adapter for PRMT1 in the DNA damage response: facilitates the recognition of TP53BP1 and MRE11 substrates by PRMT1, promoting their methylation and the DNA damage response. This chain is Zinc finger protein Gfi-1 (Gfi1), found in Rattus norvegicus (Rat).